The primary structure comprises 198 residues: Recombination protein RecR (198 aa).

The C4-type zinc-finger motif lies at 57 to 72 (CAMCNTFTESAVCETC). The Toprim domain maps to 80-175 (ALLCVVETPG…KVSRLARGVP (96 aa)).

The protein belongs to the RecR family.

Its function is as follows. May play a role in DNA repair. It seems to be involved in an RecBC-independent recombinational process of DNA repair. It may act with RecF and RecO. The sequence is that of Recombination protein RecR from Herminiimonas arsenicoxydans.